Consider the following 505-residue polypeptide: Outer capsid protein VP5 (505 aa).

Residues 1 to 42 (MGKFTSFLKRAGSATKKALTSDAAKRMYKMAGKTLQKVVESE) are involved in membrane permeabilization.

This sequence belongs to the orbivirus VP5 family.

The protein resides in the virion. VP5 protein is one of the two proteins (with VP2) which constitute the virus particle outer capsid. Acts as a membrane permeabilization protein that mediates release of viral particles from endosomal compartments into the cytoplasm. Permeabilization activity is probably negatively regulated by VP2 and is triggered by endosomal degradation of VP2 and exposure to low pH. The protein is Outer capsid protein VP5 (Segment-6) of African horse sickness virus 9 (AHSV-9).